The sequence spans 417 residues: Probable lysophospholipase BODYGUARD 4 (417 aa).

The signal sequence occupies residues 1–49; it reads MSFPRKFGTAIHAALSFIVFFFLDLLDAILCVVYEFVDEILEENSTGCY. A lipid anchor (N-palmitoyl cysteine) is attached at C50. The AB hydrolase-1 domain occupies 150 to 259; the sequence is VIFIHGFMGS…PPYFPSSVEG (110 aa). H154 is a catalytic residue. Residue S225 is the Nucleophile of the active site. Residues D367 and H395 each act as charge relay system in the active site.

Expressed in epidermal cells.

Its subcellular location is the cell membrane. The protein localises to the secreted. It localises to the cell wall. Its function is as follows. Involved in cuticle development and morphogenesis. This chain is Probable lysophospholipase BODYGUARD 4, found in Arabidopsis thaliana (Mouse-ear cress).